A 670-amino-acid polypeptide reads, in one-letter code: Small ribosomal subunit protein mS39 (670 aa).

A mitochondrion-targeting transit peptide spans 1–13 (MAAPCVRLGSVRC). 11 PPR repeats span residues 129 to 163 (VEGV…GTAP), 164 to 199 (SLET…EVQD), 209 to 239 (RPRQ…MPER), 240 to 274 (NAHS…RLTA), 275 to 314 (DVQT…NVRP), 315 to 351 (NLLT…NIEP), 352 to 392 (SLAT…FTLR), 396 to 430 (DVYF…DNRG), 438 to 472 (QSTY…LYYP), 473 to 507 (NSRG…GHSN), and 556 to 590 (SAGS…HRVP). A disordered region spans residues 187–213 (IQTSEQEQQEVQDQQETEDPKKRPRQY). Acidic residues predominate over residues 193 to 203 (EQQEVQDQQET). Positions 648 to 670 (EDLQKSHSSSSSSSSSSSDSDRE) are disordered. Low complexity predominate over residues 653 to 670 (SHSSSSSSSSSSSDSDRE).

This sequence belongs to the mitochondrion-specific ribosomal protein mS39 family.

It is found in the mitochondrion. Mitochondrial protein that may have a role in mitochondrial translation. This Xenopus tropicalis (Western clawed frog) protein is Small ribosomal subunit protein mS39 (ptcd3).